Reading from the N-terminus, the 194-residue chain is Peptidyl-tRNA hydrolase (194 aa).

Residue Tyr17 coordinates tRNA. The Proton acceptor role is filled by His22. Residues Tyr68, Asn70, and Asn116 each contribute to the tRNA site.

Belongs to the PTH family. Monomer.

Its subcellular location is the cytoplasm. The enzyme catalyses an N-acyl-L-alpha-aminoacyl-tRNA + H2O = an N-acyl-L-amino acid + a tRNA + H(+). Hydrolyzes ribosome-free peptidyl-tRNAs (with 1 or more amino acids incorporated), which drop off the ribosome during protein synthesis, or as a result of ribosome stalling. Functionally, catalyzes the release of premature peptidyl moieties from peptidyl-tRNA molecules trapped in stalled 50S ribosomal subunits, and thus maintains levels of free tRNAs and 50S ribosomes. The chain is Peptidyl-tRNA hydrolase from Marinomonas sp. (strain MWYL1).